The sequence spans 140 residues: 3-hydroxyacyl-[acyl-carrier-protein] dehydratase FabZ (140 aa).

H47 is an active-site residue.

It belongs to the thioester dehydratase family. FabZ subfamily.

The protein localises to the cytoplasm. It catalyses the reaction a (3R)-hydroxyacyl-[ACP] = a (2E)-enoyl-[ACP] + H2O. Involved in unsaturated fatty acids biosynthesis. Catalyzes the dehydration of short chain beta-hydroxyacyl-ACPs and long chain saturated and unsaturated beta-hydroxyacyl-ACPs. The polypeptide is 3-hydroxyacyl-[acyl-carrier-protein] dehydratase FabZ (Streptococcus suis (strain 98HAH33)).